The following is a 168-amino-acid chain: Gamma-glutamylaminecyclotransferase (168 aa).

Positions 1–20 (MPGPECKWSTTETGAPCGTD) are disordered. Position 32 to 35 (32 to 35 (YGTL)) interacts with substrate. Glutamate 107 functions as the Proton acceptor in the catalytic mechanism.

This sequence belongs to the gamma-glutamylcyclotransferase family. In terms of assembly, monomer.

It carries out the reaction epsilon-(gamma-L-glutamyl)-L-lysine = 5-oxo-L-proline + L-lysine. Contributes to degradation of proteins cross-linked by transglutaminases by degrading the cross-link between a lysine and a glutamic acid residue. Catalyzes the formation of 5-oxo-L-proline from L-gamma-glutamyl-L-epsilon-lysine. Inactive with L-gamma-glutamyl-alpha-amino acid substrates such as L-gamma-glutamyl-L-alpha-cysteine and L-gamma-glutamyl-L-alpha-alanine. In Bos taurus (Bovine), this protein is Gamma-glutamylaminecyclotransferase (GGACT).